Here is a 479-residue protein sequence, read N- to C-terminus: MDYHSPYFFGYLIGLIHLLGIIAALHAVFTVRTAQGAIAWALSLLFIPYFTLIPYLIFGARSFYAYIQARRQANQEMHVAMANLNWRPWVEEALTARESDSYAALRAMPKLGRMPCLANNEVKLLIDGEATFKAIFAAIEAARNTVLVQFFIIHDDTLGKQLQRLLLRKAAEGVQVFVLYDRVGSHALPGSYSQVLRDGGVQIQAFATRRGWFNRFQVNFRNHRKIVVVDGLRGFLGGHNVGDEYLGANPHLSPWRDTHVQIAGPVLACLQESFAEDWYWATRQLPPLILPDTYPENGVLCQALASGPADPQETCALFFLEAIHSATRRVWITSPYFIPDEAIFAALRLAVLRGVDVRVLIPSRPDHRIVYAASSLFAFEAVRAGVRMFRYQPGFLHQKVVLVDDEVSAIGSANLDNRSFRLNFEITLLTVDRAFADQVEQMLQSDFDQAREITAEDSRDTHRLQQLGMRIARLISPIL.

Transmembrane regions (helical) follow at residues 8 to 28 and 38 to 58; these read FFGY…LHAV and IAWA…YLIF. PLD phosphodiesterase domains are found at residues 218-245 and 392-419; these read VNFR…GDEY and QPGF…DNRS. Residues His223, Lys225, Asp230, His397, Lys399, and Asp404 contribute to the active site.

The protein belongs to the phospholipase D family. Cardiolipin synthase subfamily. ClsA sub-subfamily.

The protein resides in the cell inner membrane. The enzyme catalyses 2 a 1,2-diacyl-sn-glycero-3-phospho-(1'-sn-glycerol) = a cardiolipin + glycerol. Functionally, catalyzes the reversible phosphatidyl group transfer from one phosphatidylglycerol molecule to another to form cardiolipin (CL) (diphosphatidylglycerol) and glycerol. This Pseudomonas entomophila (strain L48) protein is Cardiolipin synthase A.